The chain runs to 339 residues: Heat-inducible transcription repressor HrcA (339 aa).

Belongs to the HrcA family.

Negative regulator of class I heat shock genes (grpE-dnaK-dnaJ and groELS operons). Prevents heat-shock induction of these operons. This is Heat-inducible transcription repressor HrcA from Clostridioides difficile (strain 630) (Peptoclostridium difficile).